A 510-amino-acid polypeptide reads, in one-letter code: Glycerol kinase (510 aa).

Thr-13 is an ADP binding site. ATP-binding residues include Thr-13 and Thr-14. A sn-glycerol 3-phosphate-binding site is contributed by Thr-13. An ADP-binding site is contributed by Arg-17. Arg-83, Glu-84, Tyr-135, and Asp-255 together coordinate sn-glycerol 3-phosphate. Glycerol is bound by residues Arg-83, Glu-84, Tyr-135, Asp-255, and Gln-256. Residues Thr-277, Gly-321, Gly-421, and Asn-425 each contribute to the ADP site. Positions 277, 321, and 421 each coordinate ATP.

Belongs to the FGGY kinase family.

It carries out the reaction glycerol + ATP = sn-glycerol 3-phosphate + ADP + H(+). The protein operates within polyol metabolism; glycerol degradation via glycerol kinase pathway; sn-glycerol 3-phosphate from glycerol: step 1/1. Functionally, key enzyme in the regulation of glycerol uptake and metabolism. Catalyzes the phosphorylation of glycerol to yield sn-glycerol 3-phosphate. This Haloarcula marismortui (strain ATCC 43049 / DSM 3752 / JCM 8966 / VKM B-1809) (Halobacterium marismortui) protein is Glycerol kinase.